We begin with the raw amino-acid sequence, 433 residues long: 3-phosphoshikimate 1-carboxyvinyltransferase (433 aa).

Residues K20, S21, and R25 each contribute to the 3-phosphoshikimate site. Residue K20 participates in phosphoenolpyruvate binding. Residues G92 and R121 each coordinate phosphoenolpyruvate. The 3-phosphoshikimate site is built by S167, S168, Q169, S195, D315, and K342. Q169 is a phosphoenolpyruvate binding site. D315 (proton acceptor) is an active-site residue. Phosphoenolpyruvate is bound by residues R346 and R388.

It belongs to the EPSP synthase family. As to quaternary structure, monomer.

The protein resides in the cytoplasm. The catalysed reaction is 3-phosphoshikimate + phosphoenolpyruvate = 5-O-(1-carboxyvinyl)-3-phosphoshikimate + phosphate. It participates in metabolic intermediate biosynthesis; chorismate biosynthesis. In terms of biological role, catalyzes the transfer of the enolpyruvyl moiety of phosphoenolpyruvate (PEP) to the 5-hydroxyl of shikimate-3-phosphate (S3P) to produce enolpyruvyl shikimate-3-phosphate and inorganic phosphate. The chain is 3-phosphoshikimate 1-carboxyvinyltransferase from Methanococcus aeolicus (strain ATCC BAA-1280 / DSM 17508 / OCM 812 / Nankai-3).